The following is a 147-amino-acid chain: uncharacterized protein (147 aa).

A run of 4 helical transmembrane segments spans residues 13–33 (LSLVFGLLFTVSGIIEIIIGL), 45–65 (LFVGDVFGGLALLAVGIAYFL), 80–100 (YLFTASIIGLGIGVIAFLILI), and 116–136 (WGFFNDLTVYLVLGMLAIIPY).

It localises to the cell membrane. This is an uncharacterized protein from Methanocaldococcus jannaschii (strain ATCC 43067 / DSM 2661 / JAL-1 / JCM 10045 / NBRC 100440) (Methanococcus jannaschii).